Here is a 150-residue protein sequence, read N- to C-terminus: Ribonuclease K6 (150 aa).

Residues 1 to 23 (MVLCFPLLLLLLVLWGPVCLLHA) form the signal peptide. His-38 acts as the Proton acceptor in catalysis. 4 disulfides stabilise this stretch: Cys-46-Cys-104, Cys-60-Cys-114, Cys-78-Cys-129, and Cys-85-Cys-92. Asn-55 carries N-linked (GlcNAc...) asparagine glycosylation. Substrate-binding positions include 61–65 (KHQNT) and Lys-86. Asn-100 is a glycosylation site (N-linked (GlcNAc...) asparagine). Arg-105 serves as a coordination point for substrate. His-145 acts as the Proton donor in catalysis.

It belongs to the pancreatic ribonuclease family. In terms of assembly, interacts (via N-terminus) with bacterial lipopolysaccharide (LPS).

It localises to the secreted. Its subcellular location is the lysosome. It is found in the cytoplasmic granule. Ribonuclease which shows a preference for the pyrimidines uridine and cytosine. Has potent antibacterial activity against a range of Gram-positive and Gram-negative bacteria, including P.aeruginosa, A.baumanii, M.luteus, S.aureus, E.faecalis, E.faecium, S.saprophyticus and E.coli. Causes loss of bacterial membrane integrity, and also promotes agglutination of Gram-negative bacteria. Probably contributes to urinary tract sterility. Bactericidal activity is independent of RNase activity. The sequence is that of Ribonuclease K6 (RNASE6) from Papio hamadryas (Hamadryas baboon).